A 166-amino-acid polypeptide reads, in one-letter code: Large ribosomal subunit protein uL10 (166 aa).

It belongs to the universal ribosomal protein uL10 family. In terms of assembly, part of the ribosomal stalk of the 50S ribosomal subunit. The N-terminus interacts with L11 and the large rRNA to form the base of the stalk. The C-terminus forms an elongated spine to which L12 dimers bind in a sequential fashion forming a multimeric L10(L12)X complex.

Its function is as follows. Forms part of the ribosomal stalk, playing a central role in the interaction of the ribosome with GTP-bound translation factors. This is Large ribosomal subunit protein uL10 from Stutzerimonas stutzeri (strain A1501) (Pseudomonas stutzeri).